The sequence spans 260 residues: Purine nucleoside phosphorylase XF_0940 (260 aa).

Zn(2+)-binding residues include histidine 79, cysteine 120, and histidine 137.

Belongs to the purine nucleoside phosphorylase YfiH/LACC1 family. In terms of assembly, homodimer. Requires Cu(2+) as cofactor. The cofactor is Zn(2+).

It catalyses the reaction adenosine + phosphate = alpha-D-ribose 1-phosphate + adenine. The enzyme catalyses S-methyl-5'-thioadenosine + phosphate = 5-(methylsulfanyl)-alpha-D-ribose 1-phosphate + adenine. It carries out the reaction inosine + phosphate = alpha-D-ribose 1-phosphate + hypoxanthine. The catalysed reaction is adenosine + H2O + H(+) = inosine + NH4(+). Functionally, purine nucleoside enzyme that catalyzes the phosphorolysis of adenosine and inosine nucleosides, yielding D-ribose 1-phosphate and the respective free bases, adenine and hypoxanthine. Also catalyzes the phosphorolysis of S-methyl-5'-thioadenosine into adenine and S-methyl-5-thio-alpha-D-ribose 1-phosphate. Also has adenosine deaminase activity. The polypeptide is Purine nucleoside phosphorylase XF_0940 (Xylella fastidiosa (strain 9a5c)).